A 295-amino-acid polypeptide reads, in one-letter code: Protease HtpX (295 aa).

The next 2 membrane-spanning stretches (helical) occupy residues 4 to 24 (ILLF…TLSL) and 41 to 61 (SSLL…SLFI). His147 lines the Zn(2+) pocket. The active site involves Glu148. A Zn(2+)-binding site is contributed by His151. 2 helical membrane passes run 158-178 (VTLA…ARII) and 199-219 (VATI…VMWF). Glu224 contacts Zn(2+).

This sequence belongs to the peptidase M48B family. Zn(2+) serves as cofactor.

The protein localises to the cell inner membrane. The chain is Protease HtpX from Pseudomonas putida (strain W619).